Reading from the N-terminus, the 390-residue chain is Acetylornithine aminotransferase (390 aa).

Residues 103-104 (GT) and Phe129 contribute to the pyridoxal 5'-phosphate site. N(2)-acetyl-L-ornithine is bound at residue Arg132. Residue 214–217 (DEVQ) participates in pyridoxal 5'-phosphate binding. Lys243 carries the post-translational modification N6-(pyridoxal phosphate)lysine. N(2)-acetyl-L-ornithine is bound at residue Ser271. Pyridoxal 5'-phosphate is bound at residue Thr272. Lys304 is covalently cross-linked (Isoglutamyl lysine isopeptide (Lys-Gln) (interchain with Q-Cter in protein Pup)).

This sequence belongs to the class-III pyridoxal-phosphate-dependent aminotransferase family. ArgD subfamily. As to quaternary structure, homodimer. The cofactor is pyridoxal 5'-phosphate.

It is found in the cytoplasm. The catalysed reaction is N(2)-acetyl-L-ornithine + 2-oxoglutarate = N-acetyl-L-glutamate 5-semialdehyde + L-glutamate. Its pathway is amino-acid biosynthesis; L-arginine biosynthesis; N(2)-acetyl-L-ornithine from L-glutamate: step 4/4. The sequence is that of Acetylornithine aminotransferase from Mycolicibacterium smegmatis (strain ATCC 700084 / mc(2)155) (Mycobacterium smegmatis).